The following is a 1404-amino-acid chain: DNA-directed RNA polymerase subunit beta' (1404 aa).

Zn(2+) contacts are provided by cysteine 70, cysteine 72, cysteine 85, and cysteine 88. Mg(2+)-binding residues include aspartate 460, aspartate 462, and aspartate 464. Cysteine 825, cysteine 899, cysteine 906, and cysteine 909 together coordinate Zn(2+).

Belongs to the RNA polymerase beta' chain family. In terms of assembly, the RNAP catalytic core consists of 2 alpha, 1 beta, 1 beta' and 1 omega subunit. When a sigma factor is associated with the core the holoenzyme is formed, which can initiate transcription. It depends on Mg(2+) as a cofactor. Requires Zn(2+) as cofactor.

It catalyses the reaction RNA(n) + a ribonucleoside 5'-triphosphate = RNA(n+1) + diphosphate. DNA-dependent RNA polymerase catalyzes the transcription of DNA into RNA using the four ribonucleoside triphosphates as substrates. This Nitrosomonas eutropha (strain DSM 101675 / C91 / Nm57) protein is DNA-directed RNA polymerase subunit beta'.